The sequence spans 641 residues: Epsin-2 (641 aa).

Arg-8, Lys-11, Arg-25, Asn-30, Arg-63, and His-73 together coordinate a 1,2-diacyl-sn-glycero-3-phospho-(1D-myo-inositol-4,5-bisphosphate). In terms of domain architecture, ENTH spans 12 to 144 (NIVNNYSEAE…KDEERLKAER (133 aa)). A phosphoserine mark is found at Arg-153 and Gln-156. Over residues 163 to 181 (SNQITFGRGSSQPNLSTSH) the composition is skewed to polar residues. Disordered regions lie at residues 163 to 214 (SNQI…GAPL) and 255 to 275 (RATS…TSGE). Arg-170 bears the Omega-N-methylarginine mark. 3 positions are modified to phosphoserine: Ser-173, Ser-192, and Ser-195. Polar residues predominate over residues 259-273 (PRVSSELEQARPQTS). 2 UIM domains span residues 275–294 (EEEL…AEQE) and 300–319 (GDDL…TVKI). The segment at 340 to 425 (ALPSSGPAAQ…QPASSAGKRA (86 aa)) is disordered. Repeat copies occupy residues 352–354 (EPW), 364–366 (NPW), 377–379 (DPW), 391–393 (DPW), 409–411 (DPW), and 427–429 (DAW). Residues 352–639 (EPWGPSASTN…AQATGTTNPF (288 aa)) form a 6 X 3 AA repeats of [DE]-P-W region. Positions 408–421 (SDPWAASQQPASSA) are enriched in low complexity. A disordered region spans residues 470-512 (TAESVTSLPSQNNGTTSPDPFESQPLTVASSKPSSARKTPESF). A compositionally biased stretch (polar residues) spans 472 to 506 (ESVTSLPSQNNGTTSPDPFESQPLTVASSKPSSAR). Residue Ser-486 is modified to Phosphoserine. The residue at position 508 (Thr-508) is a Phosphothreonine. Repeat copies occupy residues 537 to 539 (NPF) and 552 to 554 (NPF). The segment at 537–639 (NPFLAPGAPA…AQATGTTNPF (103 aa)) is 3 X 3 AA repeats of N-P-F. Ser-570 carries the post-translational modification Phosphoserine. Repeat 3 spans residues 637-639 (NPF).

Belongs to the epsin family. Binds EPS15. Interacts with ITSN1. Binds AP-2 and clathrin. Interacts with UBQLN2. Ubiquitinated. As to expression, highest expression is found in brain. Detected at lower levels in lung and liver.

The protein localises to the cytoplasm. It localises to the cytoplasmic vesicle. The protein resides in the clathrin-coated vesicle. Plays a role in the formation of clathrin-coated invaginations and endocytosis. This is Epsin-2 (EPN2) from Homo sapiens (Human).